The sequence spans 543 residues: Chaperonin GroEL (543 aa).

Residues 31-34, 88-92, glycine 415, 479-481, and aspartate 495 contribute to the ATP site; these read TMGP, DGTTT, and DAL.

It belongs to the chaperonin (HSP60) family. In terms of assembly, forms a cylinder of 14 subunits composed of two heptameric rings stacked back-to-back. Interacts with the co-chaperonin GroES.

It localises to the cytoplasm. It carries out the reaction ATP + H2O + a folded polypeptide = ADP + phosphate + an unfolded polypeptide.. Its function is as follows. Together with its co-chaperonin GroES, plays an essential role in assisting protein folding. The GroEL-GroES system forms a nano-cage that allows encapsulation of the non-native substrate proteins and provides a physical environment optimized to promote and accelerate protein folding. In Clostridium tetani (strain Massachusetts / E88), this protein is Chaperonin GroEL.